The following is a 20-amino-acid chain: Magnificalysin I (20 aa).

A plays an important role in the hemolytic activity region spans residues 1 to 10 (ALAGTIIAGA). The N-terminal region stretch occupies residues 9-20 (GASLTFKILDEV).

This sequence belongs to the actinoporin family. Sea anemone subfamily. Octamer or nonamer in membranes. Monomer in the soluble state.

The protein localises to the secreted. The protein resides in the nematocyst. It localises to the target cell membrane. Functionally, pore-forming protein that forms cations-selective hydrophilic pores of around 1 nm and causes cytolysis. Pore formation is a multi-step process that involves specific recognition of membrane sphingomyelin (but neither cholesterol nor phosphatidylcholine) using aromatic rich region and adjacent phosphocholine (POC) binding site, firm binding to the membrane (mainly driven by hydrophobic interactions) accompanied by the transfer of the N-terminal region to the lipid-water interface and finally pore formation after oligomerization of monomers. This is Magnificalysin I from Heteractis magnifica (Magnificent sea anemone).